We begin with the raw amino-acid sequence, 358 residues long: Magnesium-protoporphyrin IX monomethyl ester [oxidative] cyclase 1 (358 aa).

The protein belongs to the AcsF family. The cofactor is Fe cation.

The enzyme catalyses Mg-protoporphyrin IX 13-monomethyl ester + 3 NADPH + 3 O2 + 2 H(+) = 3,8-divinyl protochlorophyllide a + 3 NADP(+) + 5 H2O. It functions in the pathway porphyrin-containing compound metabolism; chlorophyll biosynthesis (light-independent). In terms of biological role, catalyzes the formation of the isocyclic ring in chlorophyll biosynthesis. Mediates the cyclase reaction, which results in the formation of divinylprotochlorophyllide (Pchlide) characteristic of all chlorophylls from magnesium-protoporphyrin IX 13-monomethyl ester (MgPMME). This chain is Magnesium-protoporphyrin IX monomethyl ester [oxidative] cyclase 1, found in Synechocystis sp. (strain ATCC 27184 / PCC 6803 / Kazusa).